Consider the following 191-residue polypeptide: Probable chemoreceptor glutamine deamidase CheD (191 aa).

Belongs to the CheD family.

The enzyme catalyses L-glutaminyl-[protein] + H2O = L-glutamyl-[protein] + NH4(+). Functionally, probably deamidates glutamine residues to glutamate on methyl-accepting chemotaxis receptors (MCPs), playing an important role in chemotaxis. The polypeptide is Probable chemoreceptor glutamine deamidase CheD (Hydrogenovibrio crunogenus (strain DSM 25203 / XCL-2) (Thiomicrospira crunogena)).